We begin with the raw amino-acid sequence, 377 residues long: E3 ubiquitin-protein ligase rififylin (377 aa).

An FYVE-type zinc finger spans residues 55–107; it reads TGSEPSCKACGVHFASTTRKQTCLDCKKNFCMTCSSQEGNGPRLCLLCLRFRA. The SAP 1 domain occupies 115–134; that stretch reads LMKMKVKDLRDYLSLHDIST. The disordered stretch occupies residues 176 to 249; the sequence is LTQPQTSTVP…SVDSEDSFVP (74 aa). Polar residues predominate over residues 190–212; the sequence is GLPSSPAQVTSVPLAQDQETQQA. A compositionally biased stretch (acidic residues) spans 235–245; sequence EDETQSVDSED. Residues Ser-240, Ser-243, Ser-246, and Ser-254 each carry the phosphoserine modification. The region spanning 264 to 278 is the SAP 2 domain; sequence IEGLTVRQLKEILAR. The segment at 330–365 adopts an RING-type zinc-finger fold; sequence CKICMDSPIDCVLLECGHMVTCTKCGKRMNECPICR.

In terms of assembly, interacts with CASP8 and CASP10. Interacts with RIPK1 (via protein kinase domain); involved in RIPK1 ubiquitination. Interacts with PRR5L. Interacts (via RING-type zinc finger) with p53/TP53; involved in p53/TP53 ubiquitination. Interacts (via RING-type zinc finger) with MDM2; the interaction stabilizes MDM2. Post-translationally, autoubiquitinated. In terms of processing, palmitoylated. Undergoes caspase-mediated cleavage upon death-receptor activation, by TNFSF10 for instance. May be mediated by the caspases CASP8 and CASP10 in a negative feedback loop. As to expression, ubiquitous. Detected in heart, brain, spleen, lung, liver, skeletal muscle, kidney, testis, thymus, whole embryo and embryonic stem cells.

It is found in the cytoplasm. Its subcellular location is the cytosol. It localises to the cell membrane. The protein localises to the recycling endosome membrane. It catalyses the reaction S-ubiquitinyl-[E2 ubiquitin-conjugating enzyme]-L-cysteine + [acceptor protein]-L-lysine = [E2 ubiquitin-conjugating enzyme]-L-cysteine + N(6)-ubiquitinyl-[acceptor protein]-L-lysine.. It participates in protein modification; protein ubiquitination. In terms of biological role, E3 ubiquitin-protein ligase that regulates several biological processes through the ubiquitin-mediated proteasomal degradation of various target proteins. Mediates 'Lys-48'-linked polyubiquitination of PRR5L and its subsequent proteasomal degradation thereby indirectly regulating cell migration through the mTORC2 complex. Also ubiquitinates the caspases CASP8 and CASP10, promoting their proteasomal degradation, to negatively regulate apoptosis downstream of death domain receptors. Also negatively regulates the tumor necrosis factor-mediated signaling pathway through targeting of RIPK1 to ubiquitin-mediated proteasomal degradation. Negatively regulates p53/TP53 through its direct ubiquitination and targeting to proteasomal degradation. Indirectly, may also negatively regulate p53/TP53 through ubiquitination and degradation of SFN. May also play a role in endocytic recycling. This chain is E3 ubiquitin-protein ligase rififylin, found in Mus musculus (Mouse).